The sequence spans 438 residues: tRNA modification GTPase MnmE (438 aa).

Residues arginine 19, glutamate 76, and lysine 115 each contribute to the (6S)-5-formyl-5,6,7,8-tetrahydrofolate site. Residues 211 to 363 (GYKVAIIGRP…LSKELESYLN (153 aa)) enclose the TrmE-type G domain. Residues 221–226 (NVGKSS), 240–246 (SETAGTT), and 265–268 (DTAG) contribute to the GTP site. 2 residues coordinate Mg(2+): serine 225 and threonine 246. (6S)-5-formyl-5,6,7,8-tetrahydrofolate is bound at residue lysine 438.

This sequence belongs to the TRAFAC class TrmE-Era-EngA-EngB-Septin-like GTPase superfamily. TrmE GTPase family. In terms of assembly, homodimer. Heterotetramer of two MnmE and two MnmG subunits. It depends on K(+) as a cofactor.

The protein resides in the cytoplasm. Exhibits a very high intrinsic GTPase hydrolysis rate. Involved in the addition of a carboxymethylaminomethyl (cmnm) group at the wobble position (U34) of certain tRNAs, forming tRNA-cmnm(5)s(2)U34. This Campylobacter fetus subsp. fetus (strain 82-40) protein is tRNA modification GTPase MnmE.